The following is a 137-amino-acid chain: Small ribosomal subunit protein uS9c (137 aa).

Belongs to the universal ribosomal protein uS9 family.

It localises to the plastid. It is found in the chloroplast. This Gracilaria tenuistipitata var. liui (Red alga) protein is Small ribosomal subunit protein uS9c (rps9).